Consider the following 156-residue polypeptide: uncharacterized protein (156 aa).

Residues 1 to 27 (MKLLVLRLILIISTIFVLLNLSCMVNG) form the signal peptide. N-linked (GlcNAc...) asparagine glycosylation is found at N20, N83, N103, N106, and N134.

It is found in the secreted. This is an uncharacterized protein from Dictyostelium discoideum (Social amoeba).